The primary structure comprises 555 residues: Formate--tetrahydrofolate ligase (555 aa).

64-71 (TKAGIGKT) contributes to the ATP binding site.

The protein belongs to the formate--tetrahydrofolate ligase family.

The catalysed reaction is (6S)-5,6,7,8-tetrahydrofolate + formate + ATP = (6R)-10-formyltetrahydrofolate + ADP + phosphate. Its pathway is one-carbon metabolism; tetrahydrofolate interconversion. The polypeptide is Formate--tetrahydrofolate ligase (Parabacteroides distasonis (strain ATCC 8503 / DSM 20701 / CIP 104284 / JCM 5825 / NCTC 11152)).